A 438-amino-acid chain; its full sequence is EF-hand calcium-binding domain-containing protein 3 (438 aa).

EF-hand domains lie at 47–82 and 83–118; these read SQMA…LGMN and LTKH…KNLF. The Ca(2+) site is built by D96, D98, D100, K102, and D107. The residue at position 279 (Y279) is a Phosphotyrosine. Residues 405-415 are compositionally biased toward low complexity; the sequence is SSHNSRSSSSS. Residues 405–438 form a disordered region; sequence SSHNSRSSSSSDTSECYTDSGRKRKRKGLKGFQQ. Basic residues predominate over residues 426 to 438; that stretch reads RKRKRKGLKGFQQ.

This chain is EF-hand calcium-binding domain-containing protein 3 (EFCAB3), found in Homo sapiens (Human).